The following is a 271-amino-acid chain: Acyl-[acyl-carrier-protein]--UDP-N-acetylglucosamine O-acyltransferase (271 aa).

Belongs to the transferase hexapeptide repeat family. LpxA subfamily. As to quaternary structure, homotrimer.

The protein resides in the cytoplasm. It carries out the reaction a (3R)-hydroxyacyl-[ACP] + UDP-N-acetyl-alpha-D-glucosamine = a UDP-3-O-[(3R)-3-hydroxyacyl]-N-acetyl-alpha-D-glucosamine + holo-[ACP]. The protein operates within glycolipid biosynthesis; lipid IV(A) biosynthesis; lipid IV(A) from (3R)-3-hydroxytetradecanoyl-[acyl-carrier-protein] and UDP-N-acetyl-alpha-D-glucosamine: step 1/6. Involved in the biosynthesis of lipid A, a phosphorylated glycolipid that anchors the lipopolysaccharide to the outer membrane of the cell. The polypeptide is Acyl-[acyl-carrier-protein]--UDP-N-acetylglucosamine O-acyltransferase (Ralstonia nicotianae (strain ATCC BAA-1114 / GMI1000) (Ralstonia solanacearum)).